A 420-amino-acid chain; its full sequence is Serine hydroxymethyltransferase (420 aa).

(6S)-5,6,7,8-tetrahydrofolate-binding positions include Leu123 and 127–129 (GHL). Lys232 is subject to N6-(pyridoxal phosphate)lysine.

Belongs to the SHMT family. In terms of assembly, homodimer. Pyridoxal 5'-phosphate serves as cofactor.

The protein resides in the cytoplasm. The enzyme catalyses (6R)-5,10-methylene-5,6,7,8-tetrahydrofolate + glycine + H2O = (6S)-5,6,7,8-tetrahydrofolate + L-serine. It functions in the pathway one-carbon metabolism; tetrahydrofolate interconversion. The protein operates within amino-acid biosynthesis; glycine biosynthesis; glycine from L-serine: step 1/1. Functionally, catalyzes the reversible interconversion of serine and glycine with tetrahydrofolate (THF) serving as the one-carbon carrier. This reaction serves as the major source of one-carbon groups required for the biosynthesis of purines, thymidylate, methionine, and other important biomolecules. Also exhibits THF-independent aldolase activity toward beta-hydroxyamino acids, producing glycine and aldehydes, via a retro-aldol mechanism. The protein is Serine hydroxymethyltransferase of Ehrlichia chaffeensis (strain ATCC CRL-10679 / Arkansas).